A 509-amino-acid polypeptide reads, in one-letter code: Protein root UVB sensitive 5 (509 aa).

Residues 22-49 (CQPKRRRVEHLRCSAQPSSIREDDEDAD) are disordered.

Belongs to the RUS1 family.

This chain is Protein root UVB sensitive 5, found in Arabidopsis thaliana (Mouse-ear cress).